The chain runs to 382 residues: ATP phosphoribosyltransferase regulatory subunit (382 aa).

This sequence belongs to the class-II aminoacyl-tRNA synthetase family. HisZ subfamily. In terms of assembly, heteromultimer composed of HisG and HisZ subunits.

The protein resides in the cytoplasm. It functions in the pathway amino-acid biosynthesis; L-histidine biosynthesis; L-histidine from 5-phospho-alpha-D-ribose 1-diphosphate: step 1/9. Functionally, required for the first step of histidine biosynthesis. May allow the feedback regulation of ATP phosphoribosyltransferase activity by histidine. This is ATP phosphoribosyltransferase regulatory subunit from Burkholderia ambifaria (strain MC40-6).